Here is a 562-residue protein sequence, read N- to C-terminus: Oxygen-dependent choline dehydrogenase (562 aa).

4-33 is an FAD binding site; it reads DYIIIGAGSAGNVLATRLTEDPNTTVLLLE. His473 (proton acceptor) is an active-site residue.

Belongs to the GMC oxidoreductase family. FAD serves as cofactor.

The enzyme catalyses choline + A = betaine aldehyde + AH2. It carries out the reaction betaine aldehyde + NAD(+) + H2O = glycine betaine + NADH + 2 H(+). It functions in the pathway amine and polyamine biosynthesis; betaine biosynthesis via choline pathway; betaine aldehyde from choline (cytochrome c reductase route): step 1/1. Its function is as follows. Involved in the biosynthesis of the osmoprotectant glycine betaine. Catalyzes the oxidation of choline to betaine aldehyde and betaine aldehyde to glycine betaine at the same rate. The polypeptide is Oxygen-dependent choline dehydrogenase (Escherichia coli O45:K1 (strain S88 / ExPEC)).